The sequence spans 566 residues: Peroxisomal leader peptide-processing protease (566 aa).

The serine protease stretch occupies residues 319 to 531; it reads ALAALLPPEV…LQPALQQYSQ (213 aa). Residues H372, D408, and S481 each act as charge relay system in the active site.

This sequence belongs to the peptidase S1B family. As to quaternary structure, homodimer. Forms a heterodimer with the C-terminal cleavage product (45 kDa form). Forms a heterodimer with the N-terminal cleavage product (15 kDa form). Interacts with PEX5. Interacts with LONP2. Self-cleavage gives rise to an N-terminal 15-kDa fragment and C-terminal 45-kDa fragment upon import into the peroxisomes. The full-lengh TYSND1 is the active the proteolytic processing of PTS1- and PTS2-proteins and in self-cleavage, and intermolecular self-cleavage of TYSND1 down-regulates its protease activity.

It is found in the peroxisome. Peroxisomal protease that mediates both the removal of the leader peptide from proteins containing a PTS2 target sequence and processes several PTS1-containing proteins. Catalyzes the processing of PTS1-proteins involved in the peroxisomal beta-oxidation of fatty acids. This Homo sapiens (Human) protein is Peroxisomal leader peptide-processing protease (TYSND1).